A 600-amino-acid chain; its full sequence is Albumin (600 aa).

Positions 1–10 (LLFLFSSAYS) are cleaved as a signal peptide. A propeptide spanning residues 11-16 (RGVFRR) is cleaved from the precursor. Albumin domains follow at residues 11 to 202 (RGVF…DELR), 203 to 395 (DEGK…EFQP), and 396 to 593 (LVEE…KFVA). His-19 contributes to the Cu cation binding site. The residue at position 21 (Ser-21) is a Phosphoserine. Residues Glu-22 and Asp-29 each coordinate Ca(2+). An intrachain disulfide couples Cys-69 to Cys-78. 2 positions are modified to phosphoserine: Ser-74 and Ser-81. Residue His-83 coordinates Zn(2+). Cystine bridges form between Cys-91–Cys-107, Cys-106–Cys-117, Cys-140–Cys-185, Cys-184–Cys-193, Cys-216–Cys-262, and Cys-261–Cys-269. Thr-99 carries the phosphothreonine modification. Lys-221 carries the post-translational modification N6-succinyllysine. A (4Z,15Z)-bilirubin IXalpha-binding site is contributed by Lys-256. Ca(2+) is bound at residue Glu-260. His-263 and Asp-265 together coordinate Zn(2+). Asp-265, Glu-268, Asp-271, and Asp-275 together coordinate Ca(2+). 8 disulfides stabilise this stretch: Cys-281–Cys-295, Cys-294–Cys-305, Cys-332–Cys-377, Cys-376–Cys-385, Cys-408–Cys-454, Cys-453–Cys-464, Cys-477–Cys-493, and Cys-492–Cys-503. A Phosphoserine modification is found at Ser-289. Ser-435 carries the post-translational modification Phosphoserine. Thr-436 and Thr-438 each carry phosphothreonine. An N6-succinyllysine modification is found at Lys-452. A Phosphoserine modification is found at Ser-505. 2 disulfides stabilise this stretch: Cys-530–Cys-575 and Cys-574–Cys-583. Lys-535 carries the post-translational modification N6-succinyllysine. Lys-550 carries the N6-methyllysine modification. Position 580 is an N6-succinyllysine (Lys-580).

Belongs to the ALB/AFP/VDB family. In terms of assembly, interacts with FCGRT; this interaction regulates ALB homeostasis. Interacts with TASOR. In plasma, occurs in a covalently-linked complex with chromophore-bound alpha-1-microglobulin; this interaction does not prevent fatty acid binding to ALB. Phosphorylated by FAM20C in the extracellular medium. As to expression, plasma.

Its subcellular location is the secreted. Its function is as follows. Binds water, Ca(2+), Na(+), K(+), fatty acids, hormones, bilirubin and drugs. Its main function is the regulation of the colloidal osmotic pressure of blood. Major zinc transporter in plasma, typically binds about 80% of all plasma zinc. Major calcium and magnesium transporter in plasma, binds approximately 45% of circulating calcium and magnesium in plasma. Potentially has more than two calcium-binding sites and might additionally bind calcium in a non-specific manner. The shared binding site between zinc and calcium at residue Asp-265 suggests a crosstalk between zinc and calcium transport in the blood. The rank order of affinity is zinc &gt; calcium &gt; magnesium. Binds to the bacterial siderophore enterobactin and inhibits enterobactin-mediated iron uptake of E.coli from ferric transferrin, and may thereby limit the utilization of iron and growth of enteric bacteria such as E.coli. Does not prevent iron uptake by the bacterial siderophore aerobactin. In Macaca mulatta (Rhesus macaque), this protein is Albumin (ALB).